A 208-amino-acid polypeptide reads, in one-letter code: LexA repressor (208 aa).

The H-T-H motif DNA-binding region spans 29 to 49 (VREICSAVGLSSTSTVHGHIS). Residues Ser-129 and Lys-167 each act as for autocatalytic cleavage activity in the active site.

This sequence belongs to the peptidase S24 family. In terms of assembly, homodimer.

It carries out the reaction Hydrolysis of Ala-|-Gly bond in repressor LexA.. Functionally, represses a number of genes involved in the response to DNA damage (SOS response), including recA and lexA. In the presence of single-stranded DNA, RecA interacts with LexA causing an autocatalytic cleavage which disrupts the DNA-binding part of LexA, leading to derepression of the SOS regulon and eventually DNA repair. The protein is LexA repressor of Limosilactobacillus reuteri (strain DSM 20016) (Lactobacillus reuteri).